A 463-amino-acid chain; its full sequence is Steroidogenic factor 1 (463 aa).

The nuclear receptor DNA-binding region spans 10 to 85 (DELCPVCGDK…VGMRLEAVRA (76 aa)). Residues 13–33 (CPVCGDKVSGYHYGLLTCESC) form an NR C4-type zinc finger. N6-acetyllysine is present on residues Lys34, Lys38, and Lys72. The NR C4-type zinc finger occupies 49 to 73 (CTESQNCKIDKTQRKRCPYCRFQKC). A Glycyl lysine isopeptide (Lys-Gly) (interchain with G-Cter in SUMO) cross-link involves residue Lys119. Positions 119–160 (KLETGPSMGPPPQTDYPLAPALHPGAKGLAPAPPAGPPGDYE) are disordered. Residues 135–148 (PLAPALHPGAKGLA) show a composition bias toward low complexity. Lys193 is covalently cross-linked (Glycyl lysine isopeptide (Lys-Gly) (interchain with G-Cter in SUMO)). A disordered region spans residues 197–216 (PEPYASPHEPAPPYGYPEPY). At Ser202 the chain carries Phosphoserine; by CDK7. A compositionally biased stretch (pro residues) spans 205-216 (EPAPPYGYPEPY). An NR LBD domain is found at 224–461 (GVPELILKLL…NLLIEMLHAK (238 aa)). Positions 343, 438, and 442 each coordinate a 1,2-diacyl-sn-glycero-3-phosphocholine.

It belongs to the nuclear hormone receptor family. NR5 subfamily. As to quaternary structure, binds DNA as a monomer. Part of a complex consisting of SFPQ, NONO and NR5A1. Interacts with NR0B2, NCOA2 and PPARGC1A. Interacts with DGKQ and CDK7. Binds to and activated by HIPK3. In terms of processing, acetylation stimulates the transcriptional activity. Sumoylation reduces CDK7-mediated phosphorylation on Ser-202. Post-translationally, phosphorylated on Ser-202 by CDK7. This phosphorylation promotes transcriptional activity. As to expression, expressed in the pre-granulosa and Sertoli cells of the ovary and testis, respectively. In the testis it is also present in the interstitial cells. In the adult ovary it is expressed in the interstitial gland, and in the granulosa cells and theca interna of small to medium-sized antral follicles, but is not expressed in large antral follicles.

It is found in the nucleus. Its function is as follows. Transcriptional activator. Seems to be essential for sexual differentiation and formation of the primary steroidogenic tissues. Binds to the Ad4 site found in the promoter region of steroidogenic P450 genes such as CYP11A, CYP11B and CYP21B. Also regulates the AMH/Muellerian inhibiting substance gene as well as the AHCH and STAR genes. 5'-YCAAGGYC-3' and 5'-RRAGGTCA-3' are the consensus sequences for the recognition by NR5A1. The SFPQ-NONO-NR5A1 complex binds to the CYP17 promoter and regulates basal and cAMP-dependent transcriptional activity. Binds phosphatidylcholine and phospholipids with a phosphatidylinositol (PI) headgroup, in particular PI(3,4)P2 and PI(3,4,5)P3. Activated by the phosphorylation of NR5A1 by HIPK3 leading to increased steroidogenic gene expression upon cAMP signaling pathway stimulation. The protein is Steroidogenic factor 1 (NR5A1) of Notamacropus eugenii (Tammar wallaby).